Consider the following 914-residue polypeptide: Serine/threonine-protein kinase MST20 (914 aa).

Residues 1 to 12 are compositionally biased toward polar residues; the sequence is MDGHSNFTQPSD. Disordered regions lie at residues 1 to 140, 156 to 184, and 251 to 286; these read MDGH…QLQN, NQYSAASHRRSNSYGHPHGPQSSNSLTFN, and AMSEKSQQVRGMEAQLPTSKRYSDETKEPKPGVLRK. Low complexity-rich tracts occupy residues 13–26, 63–72, and 79–97; these read TSHASHTIPSSSSS, RSSTSLRRAP, and TPTSTHASNSSSPRNPSSS. Basic and acidic residues predominate over residues 122–136; sequence ARDRDSDPARNDHGH. Basic residues predominate over residues 156–166; the sequence is NQYSAASHRRS. A compositionally biased stretch (polar residues) spans 175–184; it reads PQSSNSLTFN. Basic and acidic residues predominate over residues 271–280; sequence RYSDETKEPK. The CRIB domain maps to 306 to 319; sequence ISAPENPVHVTHVG. Residues 408–615 are disordered; that stretch reads SPMISPPASP…RHRSRQSNGL (208 aa). Low complexity-rich tracts occupy residues 516-548 and 562-576; these read AYPASQQSPAVQAAYQQQLMQQQQEQALAQAQA and QPQAQQPTPPQSQHQ. The span at 577-586 shows a compositional bias: polar residues; the sequence is YSRPTDANGA. Residues 587-596 are compositionally biased toward low complexity; it reads QQTQRPQQPQ. Residues 634-885 enclose the Protein kinase domain; that stretch reads YRSFTKIGQG…AHDLLRHEFM (252 aa). Residues 640–648 and Lys-663 contribute to the ATP site; that span reads IGQGASGGV. Asp-753 acts as the Proton acceptor in catalysis.

This sequence belongs to the protein kinase superfamily. STE Ser/Thr protein kinase family. STE20 subfamily.

It is found in the cytoplasm. It localises to the nucleus. It carries out the reaction L-seryl-[protein] + ATP = O-phospho-L-seryl-[protein] + ADP + H(+). The catalysed reaction is L-threonyl-[protein] + ATP = O-phospho-L-threonyl-[protein] + ADP + H(+). Functionally, MAP4K component of the MAPK pathway required for the mating pheromone response and the regulation of cell polarity and cell cycle. Phosphorylates histone H2B to form H2BS10ph. Is involved in conidiation, aerial hyphal growth and infection-related morphogenesis. This chain is Serine/threonine-protein kinase MST20 (MST20), found in Pyricularia oryzae (strain 70-15 / ATCC MYA-4617 / FGSC 8958) (Rice blast fungus).